A 425-amino-acid chain; its full sequence is Histidine--tRNA ligase (425 aa).

It belongs to the class-II aminoacyl-tRNA synthetase family. Homodimer.

It is found in the cytoplasm. The catalysed reaction is tRNA(His) + L-histidine + ATP = L-histidyl-tRNA(His) + AMP + diphosphate + H(+). The chain is Histidine--tRNA ligase from Shewanella sp. (strain ANA-3).